Reading from the N-terminus, the 255-residue chain is Indole-3-glycerol phosphate synthase (255 aa).

It belongs to the TrpC family.

The catalysed reaction is 1-(2-carboxyphenylamino)-1-deoxy-D-ribulose 5-phosphate + H(+) = (1S,2R)-1-C-(indol-3-yl)glycerol 3-phosphate + CO2 + H2O. Its pathway is amino-acid biosynthesis; L-tryptophan biosynthesis; L-tryptophan from chorismate: step 4/5. The polypeptide is Indole-3-glycerol phosphate synthase (Streptococcus thermophilus (strain CNRZ 1066)).